A 461-amino-acid chain; its full sequence is Serine/threonine-protein kinase ppk24, mitochondrial (461 aa).

One can recognise a Protein kinase domain in the interval 120–416; it reads FQHLKSIAKG…LDSILGTAWV (297 aa). Residues 126–134 and lysine 153 each bind ATP; that span reads IAKGATSTI. Catalysis depends on aspartate 256, which acts as the Proton acceptor.

It belongs to the protein kinase superfamily. Ser/Thr protein kinase family.

The protein resides in the mitochondrion. The enzyme catalyses L-seryl-[protein] + ATP = O-phospho-L-seryl-[protein] + ADP + H(+). It carries out the reaction L-threonyl-[protein] + ATP = O-phospho-L-threonyl-[protein] + ADP + H(+). In terms of biological role, has a role late in meiosis. This is Serine/threonine-protein kinase ppk24, mitochondrial (ppk24) from Schizosaccharomyces pombe (strain 972 / ATCC 24843) (Fission yeast).